Consider the following 436-residue polypeptide: Phosphomethylpyrimidine synthase (436 aa).

Substrate is bound by residues N68, M97, Y126, H166, S188 to G190, D229 to R232, and E268. H272 contacts Zn(2+). Residue Y295 coordinates substrate. H336 contacts Zn(2+). The [4Fe-4S] cluster site is built by C412, C415, and C419.

This sequence belongs to the ThiC family. Homodimer. The cofactor is [4Fe-4S] cluster.

The enzyme catalyses 5-amino-1-(5-phospho-beta-D-ribosyl)imidazole + S-adenosyl-L-methionine = 4-amino-2-methyl-5-(phosphooxymethyl)pyrimidine + CO + 5'-deoxyadenosine + formate + L-methionine + 3 H(+). It functions in the pathway cofactor biosynthesis; thiamine diphosphate biosynthesis. Functionally, catalyzes the synthesis of the hydroxymethylpyrimidine phosphate (HMP-P) moiety of thiamine from aminoimidazole ribotide (AIR) in a radical S-adenosyl-L-methionine (SAM)-dependent reaction. The polypeptide is Phosphomethylpyrimidine synthase (Geobacter metallireducens (strain ATCC 53774 / DSM 7210 / GS-15)).